The chain runs to 392 residues: 1-deoxy-D-xylulose 5-phosphate reductoisomerase (392 aa).

NADPH is bound by residues T14, G15, S16, I17, G40, Q43, and N126. A 1-deoxy-D-xylulose 5-phosphate-binding site is contributed by K127. NADPH is bound at residue E128. D150 is a Mn(2+) binding site. 1-deoxy-D-xylulose 5-phosphate contacts are provided by S151, E152, S176, and H199. A Mn(2+)-binding site is contributed by E152. G205 is an NADPH binding site. 1-deoxy-D-xylulose 5-phosphate is bound by residues S212, N217, K218, and E221. E221 lines the Mn(2+) pocket.

It belongs to the DXR family. Requires Mg(2+) as cofactor. Mn(2+) serves as cofactor.

The enzyme catalyses 2-C-methyl-D-erythritol 4-phosphate + NADP(+) = 1-deoxy-D-xylulose 5-phosphate + NADPH + H(+). Its pathway is isoprenoid biosynthesis; isopentenyl diphosphate biosynthesis via DXP pathway; isopentenyl diphosphate from 1-deoxy-D-xylulose 5-phosphate: step 1/6. In terms of biological role, catalyzes the NADPH-dependent rearrangement and reduction of 1-deoxy-D-xylulose-5-phosphate (DXP) to 2-C-methyl-D-erythritol 4-phosphate (MEP). This chain is 1-deoxy-D-xylulose 5-phosphate reductoisomerase, found in Corynebacterium glutamicum (strain ATCC 13032 / DSM 20300 / JCM 1318 / BCRC 11384 / CCUG 27702 / LMG 3730 / NBRC 12168 / NCIMB 10025 / NRRL B-2784 / 534).